Here is a 349-residue protein sequence, read N- to C-terminus: Cobalt-precorrin-5B C(1)-methyltransferase (349 aa).

This sequence belongs to the CbiD family.

The catalysed reaction is Co-precorrin-5B + S-adenosyl-L-methionine = Co-precorrin-6A + S-adenosyl-L-homocysteine. It participates in cofactor biosynthesis; adenosylcobalamin biosynthesis; cob(II)yrinate a,c-diamide from sirohydrochlorin (anaerobic route): step 6/10. In terms of biological role, catalyzes the methylation of C-1 in cobalt-precorrin-5B to form cobalt-precorrin-6A. The protein is Cobalt-precorrin-5B C(1)-methyltransferase of Saccharolobus solfataricus (strain ATCC 35092 / DSM 1617 / JCM 11322 / P2) (Sulfolobus solfataricus).